The following is a 202-amino-acid chain: N-(5'-phosphoribosyl)anthranilate isomerase (202 aa).

Belongs to the TrpF family.

It catalyses the reaction N-(5-phospho-beta-D-ribosyl)anthranilate = 1-(2-carboxyphenylamino)-1-deoxy-D-ribulose 5-phosphate. It participates in amino-acid biosynthesis; L-tryptophan biosynthesis; L-tryptophan from chorismate: step 3/5. The protein is N-(5'-phosphoribosyl)anthranilate isomerase of Listeria welshimeri serovar 6b (strain ATCC 35897 / DSM 20650 / CCUG 15529 / CIP 8149 / NCTC 11857 / SLCC 5334 / V8).